The sequence spans 449 residues: Chromosomal replication initiator protein DnaA (449 aa).

A domain I, interacts with DnaA modulators region spans residues 1–72 (MENIHDLWER…SETIDDLTGV (72 aa)). Residues 72 to 111 (VRLYPKFVIPTSQLDEPFVEQELKKPMKQPPAQNGEMPNN) are domain II. The interval 112 to 328 (MLNDKYTFDT…GALIRVVAYS (217 aa)) is domain III, AAA+ region. ATP contacts are provided by Gly-156, Gly-158, Lys-159, and Thr-160. The tract at residues 329-449 (SLINQDMNAD…IQDISDKLRS (121 aa)) is domain IV, binds dsDNA.

This sequence belongs to the DnaA family. In terms of assembly, oligomerizes as a right-handed, spiral filament on DNA at oriC.

Its subcellular location is the cytoplasm. Plays an essential role in the initiation and regulation of chromosomal replication. ATP-DnaA binds to the origin of replication (oriC) to initiate formation of the DNA replication initiation complex once per cell cycle. Binds the DnaA box (a 9 base pair repeat at the origin) and separates the double-stranded (ds)DNA. Forms a right-handed helical filament on oriC DNA; dsDNA binds to the exterior of the filament while single-stranded (ss)DNA is stabiized in the filament's interior. The ATP-DnaA-oriC complex binds and stabilizes one strand of the AT-rich DNA unwinding element (DUE), permitting loading of DNA polymerase. After initiation quickly degrades to an ADP-DnaA complex that is not apt for DNA replication. Binds acidic phospholipids. The sequence is that of Chromosomal replication initiator protein DnaA from Halalkalibacterium halodurans (strain ATCC BAA-125 / DSM 18197 / FERM 7344 / JCM 9153 / C-125) (Bacillus halodurans).